Reading from the N-terminus, the 204-residue chain is FMN-dependent NADH:quinone oxidoreductase 2 (204 aa).

FMN-binding positions include serine 10 and 16–18 (SIS).

Belongs to the azoreductase type 1 family. In terms of assembly, homodimer. FMN is required as a cofactor.

It carries out the reaction 2 a quinone + NADH + H(+) = 2 a 1,4-benzosemiquinone + NAD(+). It catalyses the reaction N,N-dimethyl-1,4-phenylenediamine + anthranilate + 2 NAD(+) = 2-(4-dimethylaminophenyl)diazenylbenzoate + 2 NADH + 2 H(+). In terms of biological role, quinone reductase that provides resistance to thiol-specific stress caused by electrophilic quinones. Its function is as follows. Also exhibits azoreductase activity. Catalyzes the reductive cleavage of the azo bond in aromatic azo compounds to the corresponding amines. The chain is FMN-dependent NADH:quinone oxidoreductase 2 from Jannaschia sp. (strain CCS1).